We begin with the raw amino-acid sequence, 414 residues long: Argininosuccinate synthase (414 aa).

Residues 15 to 23 (AYSGGLDTS) and Ala-42 contribute to the ATP site. 2 residues coordinate L-citrulline: Tyr-93 and Ser-98. Residue Gly-123 coordinates ATP. L-aspartate is bound by residues Thr-125, Asn-129, and Asp-130. Asn-129 provides a ligand contact to L-citrulline. Positions 133, 182, 191, 267, and 279 each coordinate L-citrulline.

The protein belongs to the argininosuccinate synthase family. Type 1 subfamily. In terms of assembly, homotetramer.

It is found in the cytoplasm. The catalysed reaction is L-citrulline + L-aspartate + ATP = 2-(N(omega)-L-arginino)succinate + AMP + diphosphate + H(+). The protein operates within amino-acid biosynthesis; L-arginine biosynthesis; L-arginine from L-ornithine and carbamoyl phosphate: step 2/3. In Deinococcus geothermalis (strain DSM 11300 / CIP 105573 / AG-3a), this protein is Argininosuccinate synthase.